We begin with the raw amino-acid sequence, 450 residues long: Phosphoglucosamine mutase (450 aa).

Catalysis depends on serine 102, which acts as the Phosphoserine intermediate. The Mg(2+) site is built by serine 102, aspartate 244, aspartate 246, and aspartate 248. The residue at position 102 (serine 102) is a Phosphoserine.

It belongs to the phosphohexose mutase family. Requires Mg(2+) as cofactor. Post-translationally, activated by phosphorylation.

The catalysed reaction is alpha-D-glucosamine 1-phosphate = D-glucosamine 6-phosphate. Catalyzes the conversion of glucosamine-6-phosphate to glucosamine-1-phosphate. This is Phosphoglucosamine mutase from Nitratidesulfovibrio vulgaris (strain ATCC 29579 / DSM 644 / CCUG 34227 / NCIMB 8303 / VKM B-1760 / Hildenborough) (Desulfovibrio vulgaris).